Reading from the N-terminus, the 301-residue chain is Prohibitin-2 (301 aa).

Necessary for transcriptional repression stretches follow at residues 19 to 49 (MGTA…GHRA) and 150 to 174 (ASQL…RAKD). A coiled-coil region spans residues 191-237 (REYTAAVESKQVAQQEAQRAQFLVEKAKQDQKQKIVQAEGEAAAAKM).

The protein belongs to the prohibitin family. The mitochondrial prohibitin complex consists of two subunits (PHB1 and PHB2), assembled into a membrane-associated ring-shaped supercomplex of approximately 1 mDa.

Its subcellular location is the mitochondrion inner membrane. It is found in the cytoplasm. The protein localises to the nucleus. The protein resides in the cell membrane. In terms of biological role, protein with pleiotropic attributes mediated in a cell-compartment- and tissue-specific manner, which include the plasma membrane-associated cell signaling functions, mitochondrial chaperone, and transcriptional co-regulator of transcription factors and sex steroid hormones in the nucleus. Its function is as follows. In the mitochondria, together with PHB, forms large ring complexes (prohibitin complexes) in the inner mitochondrial membrane (IMM) and functions as a chaperone protein that stabilizes mitochondrial respiratory enzymes and maintains mitochondrial integrity in the IMM, which is required for mitochondrial morphogenesis, neuronal survival, and normal lifespan. Functionally, in the nucleus, serves as transcriptional co-regulator. This chain is Prohibitin-2 (phb2), found in Xenopus tropicalis (Western clawed frog).